The sequence spans 63 residues: MSDNDKTVTITQVRSVIGCTQKQKATIQALGLGRPNYSVVKPDNACTRGQIRVVQHLVKIEEN.

This sequence belongs to the universal ribosomal protein uL30 family. In terms of assembly, part of the 50S ribosomal subunit.

This chain is Large ribosomal subunit protein uL30, found in Chlorobium chlorochromatii (strain CaD3).